The chain runs to 959 residues: Probable transport protein MmpL4 (959 aa).

11 helical membrane passes run 25–45 (FAVP…VFIP), 205–225 (VIVI…VILL), 239–259 (VVAL…VNLL), 300–320 (FHVI…LSFA), 333–353 (AVGM…VLTV), 381–401 (WPLP…LALP), 766–786 (WDLV…MLII), 790–810 (FVAA…SFGL), 818–838 (ILGI…LLAV), 872–892 (VVTN…VSDL), and 902–922 (IGLG…PSIA).

This sequence belongs to the resistance-nodulation-cell division (RND) (TC 2.A.6) family. MmpL subfamily.

It localises to the cell membrane. The polypeptide is Probable transport protein MmpL4 (mmpL4) (Mycobacterium leprae (strain TN)).